The chain runs to 874 residues: Dynein regulatory complex subunit 7 (874 aa).

Coiled-coil stretches lie at residues 1-67 (MEVL…SAEL) and 257-297 (RFEQ…DALH). The segment covering 386-400 (TEEDDSGINDEDDVE) has biased composition (acidic residues). Residues 386–410 (TEEDDSGINDEDDVENLGKEDEDKS) form a disordered region. Over residues 401–410 (NLGKEDEDKS) the composition is skewed to basic and acidic residues. 2 coiled-coil regions span residues 688-711 (QVWESELEVLEILKLREEEEAAHT) and 781-807 (KQRLINKANLIQARFEKETQELQKKQQ).

The protein belongs to the DRC7 family. As to quaternary structure, component of the nexin-dynein regulatory complex (N-DRC). Interacts with TCTE1/DRC5. Interacts with DRC3 and GAS8/DRC4.

It is found in the cell projection. Its subcellular location is the cilium. It localises to the flagellum. The protein localises to the cytoplasm. The protein resides in the cytoskeleton. It is found in the cilium axoneme. Its subcellular location is the flagellum axoneme. Component of the nexin-dynein regulatory complex (N-DRC) a key regulator of ciliary/flagellar motility which maintains the alignment and integrity of the distal axoneme and regulates microtubule sliding in motile axonemes. Involved in the regulation of flagellar motility. Essential for male fertility, sperm head morphogenesis and sperm flagellum formation. The protein is Dynein regulatory complex subunit 7 (DRC7) of Homo sapiens (Human).